Here is a 337-residue protein sequence, read N- to C-terminus: MNKILILLLLVSAVLTSHDQVVAVTIKPNLYNINSAPLYFEKFISQYNKQYSSEDEKKYRYNIFRHNIESINAKNSRNDSAVYKINRFADMTKNEVVNRHTGLASGDIGANFCETIVVDGPGQRQRPANFDWRNYNKVTSVKDQGMCGACWAFAGLGALESQYAIKYDRLIDLAEQQLVDCDFVDMGCDGGLIHTAYEQIMHIGGVEQEYDYPYKAVRLPCAVKPHKFAVGVRNCYRYVLLSEERLEDLLRHVGPIAIAVDAVDLTDYYGGVISFCENNGLNHAVLLVGYGIENNVPYWTIKNSWGSDYGENGYVRIRRGVNSCGMINELASSAQIA.

The first 16 residues, 1–16, serve as a signal peptide directing secretion; it reads MNKILILLLLVSAVLT. A propeptide spans 17–126 (activation peptide); sequence SHDQVVAVTI…VVDGPGQRQR (110 aa). 3 cysteine pairs are disulfide-bonded: C147/C188, C181/C221, and C276/C324. Residue C150 is part of the active site. Residues H283 and N303 contribute to the active site.

This sequence belongs to the peptidase C1 family. Post-translationally, synthesized as an inactive proenzyme and activated by proteolytic removal of the inhibitory propeptide.

It catalyses the reaction Endopeptidase of broad specificity, hydrolyzing substrates of both cathepsin L and cathepsin B.. Cysteine protease that plays an essential role in host liquefaction to facilitate horizontal transmission of the virus. May participate in the degradation of foreign protein expressed by the baculovirus system. This Mamestra configurata (bertha armyworm) protein is Viral cathepsin (VCATH).